Reading from the N-terminus, the 1177-residue chain is DNA-directed RNA polymerase subunit beta (1177 aa).

Acidic residues predominate over residues 1147 to 1161; the sequence is DDTEIEMRDTEDDDD. The tract at residues 1147–1177 is disordered; it reads DDTEIEMRDTEDDDDHQSADKLNVEVETTKE. Basic and acidic residues predominate over residues 1162–1177; the sequence is HQSADKLNVEVETTKE.

The protein belongs to the RNA polymerase beta chain family. As to quaternary structure, the RNAP catalytic core consists of 2 alpha, 1 beta, 1 beta' and 1 omega subunit. When a sigma factor is associated with the core the holoenzyme is formed, which can initiate transcription.

The enzyme catalyses RNA(n) + a ribonucleoside 5'-triphosphate = RNA(n+1) + diphosphate. Functionally, DNA-dependent RNA polymerase catalyzes the transcription of DNA into RNA using the four ribonucleoside triphosphates as substrates. This Bacillus anthracis (strain A0248) protein is DNA-directed RNA polymerase subunit beta.